We begin with the raw amino-acid sequence, 303 residues long: N-acetyl-D-glucosamine kinase (303 aa).

ATP-binding positions include 4–11 and 133–140; these read GFDIGGTK and GVGGGLIF. Residues histidine 157, cysteine 177, cysteine 179, and cysteine 184 each contribute to the Zn(2+) site.

It belongs to the ROK (NagC/XylR) family. NagK subfamily.

The catalysed reaction is N-acetyl-D-glucosamine + ATP = N-acetyl-D-glucosamine 6-phosphate + ADP + H(+). The protein operates within cell wall biogenesis; peptidoglycan recycling. In terms of biological role, catalyzes the phosphorylation of N-acetyl-D-glucosamine (GlcNAc) derived from cell-wall degradation, yielding GlcNAc-6-P. This Escherichia coli O7:K1 (strain IAI39 / ExPEC) protein is N-acetyl-D-glucosamine kinase.